We begin with the raw amino-acid sequence, 304 residues long: ATP synthase gamma chain (304 aa).

This sequence belongs to the ATPase gamma chain family. F-type ATPases have 2 components, CF(1) - the catalytic core - and CF(0) - the membrane proton channel. CF(1) has five subunits: alpha(3), beta(3), gamma(1), delta(1), epsilon(1). CF(0) has three main subunits: a, b and c.

The protein resides in the cell membrane. Produces ATP from ADP in the presence of a proton gradient across the membrane. The gamma chain is believed to be important in regulating ATPase activity and the flow of protons through the CF(0) complex. The protein is ATP synthase gamma chain of Mycolicibacterium paratuberculosis (strain ATCC BAA-968 / K-10) (Mycobacterium paratuberculosis).